The chain runs to 247 residues: UPF0273 protein PF1931 (247 aa).

One can recognise a KaiC domain in the interval arginine 3–leucine 247. Glycine 30–serine 37 is an ATP binding site.

The protein belongs to the UPF0273 family.

The sequence is that of UPF0273 protein PF1931 from Pyrococcus furiosus (strain ATCC 43587 / DSM 3638 / JCM 8422 / Vc1).